The following is a 321-amino-acid chain: Aspartate carbamoyltransferase catalytic subunit (321 aa).

R70 and T71 together coordinate carbamoyl phosphate. K98 is a binding site for L-aspartate. 3 residues coordinate carbamoyl phosphate: R120, H148, and Q151. R181 and R235 together coordinate L-aspartate. Residues G276 and P277 each contribute to the carbamoyl phosphate site.

It belongs to the aspartate/ornithine carbamoyltransferase superfamily. ATCase family. In terms of assembly, heterododecamer (2C3:3R2) of six catalytic PyrB chains organized as two trimers (C3), and six regulatory PyrI chains organized as three dimers (R2).

The catalysed reaction is carbamoyl phosphate + L-aspartate = N-carbamoyl-L-aspartate + phosphate + H(+). It functions in the pathway pyrimidine metabolism; UMP biosynthesis via de novo pathway; (S)-dihydroorotate from bicarbonate: step 2/3. Catalyzes the condensation of carbamoyl phosphate and aspartate to form carbamoyl aspartate and inorganic phosphate, the committed step in the de novo pyrimidine nucleotide biosynthesis pathway. In Gluconacetobacter diazotrophicus (strain ATCC 49037 / DSM 5601 / CCUG 37298 / CIP 103539 / LMG 7603 / PAl5), this protein is Aspartate carbamoyltransferase catalytic subunit.